We begin with the raw amino-acid sequence, 363 residues long: tRNA N6-adenosine threonylcarbamoyltransferase (363 aa).

Fe cation-binding residues include histidine 117 and histidine 121. Substrate contacts are provided by residues 139–143 (LVSGG), aspartate 172, glycine 185, and asparagine 287. Aspartate 315 lines the Fe cation pocket.

The protein belongs to the KAE1 / TsaD family. Requires Fe(2+) as cofactor.

It localises to the cytoplasm. It carries out the reaction L-threonylcarbamoyladenylate + adenosine(37) in tRNA = N(6)-L-threonylcarbamoyladenosine(37) in tRNA + AMP + H(+). Required for the formation of a threonylcarbamoyl group on adenosine at position 37 (t(6)A37) in tRNAs that read codons beginning with adenine. Is involved in the transfer of the threonylcarbamoyl moiety of threonylcarbamoyl-AMP (TC-AMP) to the N6 group of A37, together with TsaE and TsaB. TsaD likely plays a direct catalytic role in this reaction. This is tRNA N6-adenosine threonylcarbamoyltransferase from Cereibacter sphaeroides (strain ATCC 17025 / ATH 2.4.3) (Rhodobacter sphaeroides).